The chain runs to 238 residues: Endo-chitosanase (238 aa).

An N-terminal signal peptide occupies residues 1 to 17 (MRLSEILTVALVTGATA). N83 carries N-linked (GlcNAc...) asparagine glycosylation.

This sequence belongs to the glycosyl hydrolase 75 family.

The protein localises to the secreted. The enzyme catalyses Endohydrolysis of beta-(1-&gt;4)-linkages between D-glucosamine residues in a partly acetylated chitosan.. Functionally, chitosanase catalyzing the endo-type cleavage of chitosan, the deacylated form of chitin. Chitosanase may be crucial in the degradation of the deacetylated portion of chitin in the fungal cell wall. Chitoolisaccharides produced by the hydrolysis of partially N-acetylated chitosan are known to have many biological activities, including antibacterial activity, immune-enhancing effects, and elicitor activity. The chitosans with higher degrees of deacetylation were shown to be the better substrates. Chitodimer, chitotrimer, and chitotetramer are the major products but monoacetyl chitodimer, monoacetyl chitotrimer, and monoacetyl chitotetramer are also produced. The polypeptide is Endo-chitosanase (csn) (Aspergillus fumigatus (Neosartorya fumigata)).